The sequence spans 119 residues: Protein MGF 110-13L-B (119 aa).

A signal peptide spans 1–16 (MKLLALLCILIWLSQP).

Belongs to the asfivirus MGF 110 family.

This Ornithodoros (relapsing fever ticks) protein is Protein MGF 110-13L-B.